The chain runs to 427 residues: Ectoine TRAP transporter large permease protein TeaC (427 aa).

A run of 12 helical transmembrane segments spans residues 13–35 (LLLGFPMMIPLATASIIGFFMMF), 49–69 (MAGIRPASLIAVPMFILAADI), 79–99 (LINMVMAFIGHIKGGLAVSTA), 103–123 (TLFGAVSGSTQATVVAVGSPL), 147–167 (IAFLIPPSIGMIIYGIISGTS), 172–192 (FIAGIGPGLMILVMFAIYCVI), 216–236 (LALWPLGFPVIIIGGIYGGIF), 237–257 (SPTEAAAACVLYAVLLEFVVF), 273–293 (GLITAVVFILVAVGNSFSWII), 320–340 (ICVAFFVACMFVDPIVVILVL), 356–376 (VLVGILITLQVAIGSATPPFG), and 400–420 (FIFMLVLAAALLILFPQIALF).

It belongs to the TRAP transporter large permease family. As to quaternary structure, the complex comprises the extracytoplasmic solute receptor protein TeaA, and the two transmembrane proteins TeaB and TeaC.

It is found in the cell inner membrane. Part of the tripartite ATP-independent periplasmic (TRAP) transport system TeaABC involved in the uptake of ectoine and hydroxyectoine in response to osmotic upshock. Probably functions as a recovery system for synthesized ectoine that leaks out of the cell. This chain is Ectoine TRAP transporter large permease protein TeaC (teaC), found in Halomonas elongata (strain ATCC 33173 / DSM 2581 / NBRC 15536 / NCIMB 2198 / 1H9).